Consider the following 158-residue polypeptide: Transcription elongation factor GreA (158 aa).

Belongs to the GreA/GreB family.

Its function is as follows. Necessary for efficient RNA polymerase transcription elongation past template-encoded arresting sites. The arresting sites in DNA have the property of trapping a certain fraction of elongating RNA polymerases that pass through, resulting in locked ternary complexes. Cleavage of the nascent transcript by cleavage factors such as GreA or GreB allows the resumption of elongation from the new 3'terminus. GreA releases sequences of 2 to 3 nucleotides. The chain is Transcription elongation factor GreA from Allorhizobium ampelinum (strain ATCC BAA-846 / DSM 112012 / S4) (Agrobacterium vitis (strain S4)).